The sequence spans 594 residues: Cytoplasmic polyadenylation element-binding protein 1 (594 aa).

Positions 1-33 (MQHQVKACGDSKSTTRSLQGNRRSGAASLKKPS) are disordered. Positions 11–22 (SKSTTRSLQGNR) are enriched in polar residues. RRM domains follow at residues 257–364 (RKVF…PWRL) and 381–452 (RTVF…HAET). Positions 519 to 560 (TGDQTRILPRPPHHQSSHYSPRSHQMMNHDSMESSNQSRGNT) are disordered. A compositionally biased stretch (polar residues) spans 535-560 (SHYSPRSHQMMNHDSMESSNQSRGNT).

As to quaternary structure, interacts with fbf-1.

Functionally, cytoplasmic polyadenylation element binding protein that binds to and regulates the translation of specific mRNAs. Essential for progression through meiosis. Involved in spermatogenesis. The sequence is that of Cytoplasmic polyadenylation element-binding protein 1 (cpb-1) from Caenorhabditis remanei (Caenorhabditis vulgaris).